Reading from the N-terminus, the 154-residue chain is UPF0547 protein C16orf87 homolog (154 aa).

The interval 43–119 (NAKHSEKSPP…KHEEEREKQE (77 aa)) is disordered. A compositionally biased stretch (basic and acidic residues) spans 68–84 (VRREKINSTVNKDLENR). At Ser91 the chain carries Phosphoserine. The stretch at 104 to 132 (KSSSAKKHEEEREKQEKEIDIYANLSDEK) forms a coiled coil. Positions 109 to 119 (KKHEEEREKQE) are enriched in basic and acidic residues.

It belongs to the UPF0547 family.

The sequence is that of UPF0547 protein C16orf87 homolog from Mus musculus (Mouse).